The chain runs to 313 residues: Homoserine O-succinyltransferase (313 aa).

Cys-142 (acyl-thioester intermediate) is an active-site residue. The substrate site is built by Lys-163 and Ser-192. His-235 (proton acceptor) is an active-site residue. Glu-237 is an active-site residue. Position 249 (Arg-249) interacts with substrate.

Belongs to the MetA family.

It localises to the cytoplasm. It carries out the reaction L-homoserine + succinyl-CoA = O-succinyl-L-homoserine + CoA. It participates in amino-acid biosynthesis; L-methionine biosynthesis via de novo pathway; O-succinyl-L-homoserine from L-homoserine: step 1/1. Functionally, transfers a succinyl group from succinyl-CoA to L-homoserine, forming succinyl-L-homoserine. This is Homoserine O-succinyltransferase from Vibrio atlanticus (strain LGP32) (Vibrio splendidus (strain Mel32)).